The following is a 97-amino-acid chain: Putative pterin-4-alpha-carbinolamine dehydratase (97 aa).

The protein belongs to the pterin-4-alpha-carbinolamine dehydratase family.

The catalysed reaction is (4aS,6R)-4a-hydroxy-L-erythro-5,6,7,8-tetrahydrobiopterin = (6R)-L-erythro-6,7-dihydrobiopterin + H2O. In Brucella abortus (strain S19), this protein is Putative pterin-4-alpha-carbinolamine dehydratase.